A 299-amino-acid chain; its full sequence is Phosphate import ATP-binding protein PstB 1 (299 aa).

A disordered region spans residues 1-51 (MTENEMTSNDSTEPTPTTETAASSPDPSGDPLIEQSIDVEGTDSTAAETGK). A compositionally biased stretch (low complexity) spans 10-27 (DSTEPTPTTETAASSPDP). One can recognise an ABC transporter domain in the interval 54–294 (IESSDLNVFY…PESQRVEDYI (241 aa)). Residue 86 to 93 (GPSGCGKS) participates in ATP binding.

This sequence belongs to the ABC transporter superfamily. Phosphate importer (TC 3.A.1.7) family. In terms of assembly, the complex is composed of two ATP-binding proteins (PstB), two transmembrane proteins (PstC and PstA) and a solute-binding protein (PstS).

It localises to the cell membrane. It carries out the reaction phosphate(out) + ATP + H2O = ADP + 2 phosphate(in) + H(+). Its function is as follows. Part of the ABC transporter complex PstSACB involved in phosphate import. Responsible for energy coupling to the transport system. This is Phosphate import ATP-binding protein PstB 1 from Haloarcula marismortui (strain ATCC 43049 / DSM 3752 / JCM 8966 / VKM B-1809) (Halobacterium marismortui).